Reading from the N-terminus, the 347-residue chain is MMASLGGDNSQAEGAEVRHVPVLIAEVIDALKPVSGAVIVDGTFGAGGYTRRILEAGADVIAIDRDPTAIEAGRAMEKQFPGRLDLVESRFSALDEAVSKVKGAGSKVDGVVLDIGVSSMQIDEAERGFSFQKDGPLDMRMSKKGPSAADVVNRLKTGDLARIFNFLGEERHAGRIARMIDKRRTAQPFTRTLDLANAIETLVGRNPKDRIHPATRVFQALRVYVNDELGELARALLAAERILKPGGRLVVVTFHSLEDRMVKRYFADRAGGSAGSRHLPETHVRLPSFTPAVKGAVGPTAEEEERNPRARSAKLRAGIRTENPPLEDDLSLFGLPKLPETNELARS.

S-adenosyl-L-methionine-binding positions include 47 to 49, D64, F91, D114, and Q121; that span reads GGY. The segment at 291–347 is disordered; it reads PAVKGAVGPTAEEEERNPRARSAKLRAGIRTENPPLEDDLSLFGLPKLPETNELARS.

This sequence belongs to the methyltransferase superfamily. RsmH family.

The protein resides in the cytoplasm. The catalysed reaction is cytidine(1402) in 16S rRNA + S-adenosyl-L-methionine = N(4)-methylcytidine(1402) in 16S rRNA + S-adenosyl-L-homocysteine + H(+). Its function is as follows. Specifically methylates the N4 position of cytidine in position 1402 (C1402) of 16S rRNA. The sequence is that of Ribosomal RNA small subunit methyltransferase H from Brucella anthropi (strain ATCC 49188 / DSM 6882 / CCUG 24695 / JCM 21032 / LMG 3331 / NBRC 15819 / NCTC 12168 / Alc 37) (Ochrobactrum anthropi).